A 431-amino-acid polypeptide reads, in one-letter code: Enolase (431 aa).

Glutamine 163 provides a ligand contact to (2R)-2-phosphoglycerate. Glutamate 205 serves as the catalytic Proton donor. The Mg(2+) site is built by aspartate 242, glutamate 288, and aspartate 315. (2R)-2-phosphoglycerate is bound by residues lysine 340, arginine 369, serine 370, and lysine 391. Lysine 340 (proton acceptor) is an active-site residue.

It belongs to the enolase family. Requires Mg(2+) as cofactor.

The protein resides in the cytoplasm. The protein localises to the secreted. Its subcellular location is the cell surface. It catalyses the reaction (2R)-2-phosphoglycerate = phosphoenolpyruvate + H2O. The protein operates within carbohydrate degradation; glycolysis; pyruvate from D-glyceraldehyde 3-phosphate: step 4/5. Its function is as follows. Catalyzes the reversible conversion of 2-phosphoglycerate (2-PG) into phosphoenolpyruvate (PEP). It is essential for the degradation of carbohydrates via glycolysis. In Trichlorobacter lovleyi (strain ATCC BAA-1151 / DSM 17278 / SZ) (Geobacter lovleyi), this protein is Enolase.